The following is a 450-amino-acid chain: Histidinol dehydrogenase (450 aa).

The NAD(+) site is built by Y135, Q197, and N225. Residues T248, Q270, and H273 each contribute to the substrate site. Zn(2+) contacts are provided by Q270 and H273. Active-site proton acceptor residues include E339 and H340. Substrate contacts are provided by H340, D373, E427, and H432. D373 provides a ligand contact to Zn(2+). H432 serves as a coordination point for Zn(2+).

The protein belongs to the histidinol dehydrogenase family. The cofactor is Zn(2+).

The catalysed reaction is L-histidinol + 2 NAD(+) + H2O = L-histidine + 2 NADH + 3 H(+). Its pathway is amino-acid biosynthesis; L-histidine biosynthesis; L-histidine from 5-phospho-alpha-D-ribose 1-diphosphate: step 9/9. In terms of biological role, catalyzes the sequential NAD-dependent oxidations of L-histidinol to L-histidinaldehyde and then to L-histidine. The sequence is that of Histidinol dehydrogenase from Corynebacterium jeikeium (strain K411).